Reading from the N-terminus, the 440-residue chain is Exosome complex component RRP45 (440 aa).

Ser65 bears the Phosphoserine mark. At Lys297 the chain carries N6-acetyllysine; alternate. Lys297 is covalently cross-linked (Glycyl lysine isopeptide (Lys-Gly) (interchain with G-Cter in SUMO1); alternate). Lys297 participates in a covalent cross-link: Glycyl lysine isopeptide (Lys-Gly) (interchain with G-Cter in SUMO2); alternate. Phosphoserine occurs at positions 306 and 346. Residues 341 to 362 form a disordered region; sequence EGIENSWGHLEDSEKEDEDEGG. The span at 353-362 shows a compositional bias: acidic residues; the sequence is SEKEDEDEGG. Phosphoserine is present on residues Ser393 and Ser395. The interval 404-440 is disordered; the sequence is EPDKNPKKIRTQTISATQVKAPSKKPVKKRKKKRAAN. Basic residues predominate over residues 425-440; it reads PSKKPVKKRKKKRAAN.

This sequence belongs to the RNase PH family. As to quaternary structure, component of the RNA exosome core complex (Exo-9), composed of EXOSC1, EXOSC2, EXOSC3, EXOSC4, EXOSC5, EXOSC6, EXOSC7, EXOSC8 and EXOSC9; within the complex interacts with EXOSC3, EXOSC4, EXOSC5 and DIS3. The catalytically inactive RNA exosome core complex (Exo-9) associates with the catalytic subunit EXOSC10/RRP6. Exo-9 may associate with DIS3 to form the nucleolar exosome complex, or DIS3L to form the cytoplasmic exosome complex. Exo-9 is formed by a hexameric base ring consisting of the heterodimers EXOSC4-EXOSC9, EXOSC5-EXOSC8 and EXOSC6-EXOSC7, and a cap ring consisting of EXOSC1, EXOSC2 and EXOSC3. The RNA exosome complex associates with cofactors C1D/RRP47, MPHOSPH6/MPP6 and MTREX/MTR4. Interacts (via C-terminus region) with SETX (via N-terminus domain); the interaction enhances SETX sumoylation. Interacts with DIS3; the interaction is direct.

It localises to the cytoplasm. It is found in the nucleus. The protein localises to the nucleolus. Its subcellular location is the nucleoplasm. Its function is as follows. Non-catalytic component of the RNA exosome complex which has 3'-&gt;5' exoribonuclease activity and participates in a multitude of cellular RNA processing and degradation events. In the nucleus, the RNA exosome complex is involved in proper maturation of stable RNA species such as rRNA, snRNA and snoRNA, in the elimination of RNA processing by-products and non-coding 'pervasive' transcripts, such as antisense RNA species and promoter-upstream transcripts (PROMPTs), and of mRNAs with processing defects, thereby limiting or excluding their export to the cytoplasm. The RNA exosome may be involved in Ig class switch recombination (CSR) and/or Ig variable region somatic hypermutation (SHM) by targeting AICDA deamination activity to transcribed dsDNA substrates. In the cytoplasm, the RNA exosome complex is involved in general mRNA turnover and specifically degrades inherently unstable mRNAs containing AU-rich elements (AREs) within their 3' untranslated regions, and in RNA surveillance pathways, preventing translation of aberrant mRNAs. It seems to be involved in degradation of histone mRNA. The catalytic inactive RNA exosome core complex of 9 subunits (Exo-9) is proposed to play a pivotal role in the binding and presentation of RNA for ribonucleolysis, and to serve as a scaffold for the association with catalytic subunits and accessory proteins or complexes. EXOSC9 binds to ARE-containing RNAs. This Bos taurus (Bovine) protein is Exosome complex component RRP45 (EXOSC9).